Here is a 147-residue protein sequence, read N- to C-terminus: Large ribosomal subunit protein uL15 (147 aa).

Residues 1 to 65 (MQLHELKPAP…PLQRRLPKRG (65 aa)) form a disordered region. Gly residues-rich tracts occupy residues 21–31 (QGIGSGLGKTA) and 42–52 (SGGGVRPGFEG).

Belongs to the universal ribosomal protein uL15 family. Part of the 50S ribosomal subunit.

In terms of biological role, binds to the 23S rRNA. The protein is Large ribosomal subunit protein uL15 of Heliobacterium modesticaldum (strain ATCC 51547 / Ice1).